A 690-amino-acid chain; its full sequence is MDTSRRAVESYWRSRMIDAVTSDEDKVAPVYKLEEICDLLRSSHVSIVKEFSEFILKRLDNKSPIVKQKALRLIKYAVGKSGSEFRREMQRNSVAVRNLFHYKGHPDPLKGDALNKAVRETAHETISAIFSEENGTKPAAPESINRRIEGFGNTNFQVPSNDNKSFLSEVVGIGSASIKQGISNFAQGHLPKKNENGSSSYRGPNLHRSLTMENENFSRYDPVKLGKDGNYGTSKNTTGGSWGHASGEASESSASVRVESKTREEKLLETIVTSGGVRLQPTRDALHVFILEAAKMDAVALSIALDGKLHSPMWQVRMKALCVLEAILRKKEDENFSIVHTYFSENLDAIQRCAESPQSSLREKANKVLSLLNGGQSSGLMSSSDNTVKREAAVDLPDLIDTGDSDDTLNNLNAIDTGSTVATAGPLMDDDWFGDSSDIGLSSSEKKTDDDPFADVSFHPNEEKESADDLFSGMTVGEKSAAVGGNHVPDLFDMFGSTAKLEAEPKDAKNINDLMGSFSIDENNSNQKGSSSSTLPQDLFAMPSTTSHQAPENPVGGILGSQNPGFIQNTMLPGGVMPFNFPQGMMMNPAFASQPLNYAAMASLLAQQQQYLGNMSNFQQFGNLNAQGSGNVLSMGTSGGNQSALPDIFQPNFGNQAPTSTMNGSKKEDTRAFDFISDHLTSARDTKRVS.

Residues 20 to 150 (VTSDEDKVAP…PESINRRIEG (131 aa)) enclose the VHS domain. Disordered stretches follow at residues 228-258 (DGNY…SVRV) and 518-551 (FSID…HQAP). The segment covering 243-257 (GHASGEASESSASVR) has biased composition (low complexity). A compositionally biased stretch (polar residues) spans 520–536 (IDENNSNQKGSSSSTLP).

In terms of assembly, binds to clathrin heavy chain. In terms of tissue distribution, expressed in inflorescence stems, stigmas, roots, roots meristems, embryos, and floral and leaf vasculatures, but absent from the floral abscission zone.

The protein resides in the golgi apparatus. It localises to the trans-Golgi network. Its subcellular location is the cytoplasmic vesicle. The protein localises to the clathrin-coated vesicle. Functionally, mediates clathrin-dependent trafficking of vacuolar cargo from the trans-Golgi network (TGN). Promotes plant growth. The polypeptide is Protein MODIFIED TRANSPORT TO THE VACUOLE 1 (Arabidopsis thaliana (Mouse-ear cress)).